We begin with the raw amino-acid sequence, 388 residues long: Homeobox protein Hox-A13 (388 aa).

The segment at residues 322–381 (GRKKRVPYTKVQLKELEREYATNKFITKDKRRRISATTNLSERQVTIWFQNRRVKEKKVI) is a DNA-binding region (homeobox).

The protein belongs to the Abd-B homeobox family. Binds DNA as a homodimer. Interacts with MEIS1, MEIS2 and MEIS3.

The protein localises to the nucleus. In terms of biological role, sequence-specific, AT-rich binding transcription factor which is part of a developmental regulatory system that provides cells with specific positional identities on the anterior-posterior axis. Sequence-specific transcription factor which is part of a developmental regulatory system that provides cells with specific positional identities on the anterior-posterior axis. The protein is Homeobox protein Hox-A13 (HOXA13) of Homo sapiens (Human).